A 345-amino-acid polypeptide reads, in one-letter code: Selenide, water dikinase (345 aa).

Residue Cys16 is part of the active site. ATP-binding positions include Lys19 and 46–48 (TSD). Residue Asp49 participates in Mg(2+) binding. ATP contacts are provided by residues Asp66, Asp89, and 136 to 138 (GHT). Asp89 is a binding site for Mg(2+). Asp224 is a Mg(2+) binding site.

It belongs to the selenophosphate synthase 1 family. Class I subfamily. In terms of assembly, homodimer. It depends on Mg(2+) as a cofactor.

The enzyme catalyses hydrogenselenide + ATP + H2O = selenophosphate + AMP + phosphate + 2 H(+). In terms of biological role, synthesizes selenophosphate from selenide and ATP. This is Selenide, water dikinase from Clostridium botulinum (strain Alaska E43 / Type E3).